Here is a 162-residue protein sequence, read N- to C-terminus: Phosphopantetheine adenylyltransferase (162 aa).

A substrate-binding site is contributed by Thr-9. ATP-binding positions include 9–10 (TF) and His-17. Substrate is bound by residues Lys-41, Leu-73, and Arg-87. ATP is bound by residues 88–90 (GLR), Glu-98, and 123–129 (LSYISSS).

It belongs to the bacterial CoaD family. In terms of assembly, homohexamer. It depends on Mg(2+) as a cofactor.

Its subcellular location is the cytoplasm. It catalyses the reaction (R)-4'-phosphopantetheine + ATP + H(+) = 3'-dephospho-CoA + diphosphate. It functions in the pathway cofactor biosynthesis; coenzyme A biosynthesis; CoA from (R)-pantothenate: step 4/5. In terms of biological role, reversibly transfers an adenylyl group from ATP to 4'-phosphopantetheine, yielding dephospho-CoA (dPCoA) and pyrophosphate. This Teredinibacter turnerae (strain ATCC 39867 / T7901) protein is Phosphopantetheine adenylyltransferase.